A 289-amino-acid chain; its full sequence is Complement C1q tumor necrosis factor-related protein 7 (289 aa).

The first 16 residues, 1–16, serve as a signal peptide directing secretion; it reads MIVLLYVTSLAICASG. Positions 36-134 are disordered; the sequence is IPGLPGPPGP…GDRGDQGDPG (99 aa). Residues 38-139 enclose the Collagen-like domain; that stretch reads GLPGPPGPPG…QGDPGLPGVC (102 aa). Positions 48 to 61 are enriched in low complexity; that stretch reads ANGSPGPHGRIGLP. Basic and acidic residues predominate over residues 63 to 76; it reads RDGRDGRKGEKGEK. Residues 78-91 show a composition bias toward low complexity; sequence TAGLKGKTGPLGLA. Residues 93–102 show a composition bias toward basic and acidic residues; that stretch reads EKGDQGETGK. The C1q domain occupies 143–279; sequence SIVLKSAFSV…GFLLYVDTDY (137 aa).

It localises to the secreted. This chain is Complement C1q tumor necrosis factor-related protein 7 (C1qtnf7), found in Mus musculus (Mouse).